The sequence spans 122 residues: MIQPKTHLNVADNSGARELMCIRIIGASNHRYAHIGDVIVAVIKEAVPNMPLERSEVIRAVIVRTCKELKRDNGMIIRYDDNAAVVIDQEGNPRGTRVFGAIARELRQLNFTKIVSLAPEVL.

This sequence belongs to the universal ribosomal protein uL14 family. Part of the 50S ribosomal subunit.

It localises to the plastid. Its subcellular location is the chloroplast. Its function is as follows. Binds to 23S rRNA. The protein is Large ribosomal subunit protein uL14c of Chloranthus spicatus (Chulantree).